Reading from the N-terminus, the 267-residue chain is Alkaline ceramidase 3 (267 aa).

Topologically, residues Met-1–Glu-33 are cytoplasmic. Ca(2+) is bound by residues Asp-19, Trp-20, Glu-22, Asn-24, and Glu-33. Residues Phe-34 to Ile-55 traverse the membrane as a helical segment. Residues Arg-56 to Lys-61 lie on the Lumenal side of the membrane. A helical transmembrane segment spans residues Arg-62–Met-82. His-81 is a Zn(2+) binding site. The Cytoplasmic portion of the chain corresponds to Thr-83–Glu-87. Residues Met-88–Phe-108 traverse the membrane as a helical segment. The Lumenal portion of the chain corresponds to Glu-109–Asn-118. A helical membrane pass occupies residues Tyr-119 to Val-139. Topologically, residues Lys-140 to Glu-141 are cytoplasmic. The chain crosses the membrane as a helical span at residues Pro-142–Tyr-162. Residues Ile-163 to Gly-173 lie on the Lumenal side of the membrane. The chain crosses the membrane as a helical span at residues Leu-174–Ile-194. Residues Phe-195–Gln-215 lie on the Cytoplasmic side of the membrane. Residues Phe-216–Leu-236 traverse the membrane as a helical segment. Zn(2+)-binding residues include His-217 and His-221. Topologically, residues Tyr-237 to His-267 are lumenal.

This sequence belongs to the alkaline ceramidase family. Zn(2+) is required as a cofactor. Up-regulated with age in cerebeLlum and cerebrum.

It is found in the endoplasmic reticulum membrane. The protein resides in the golgi apparatus membrane. The enzyme catalyses an N-acyl-(4R)-4-hydroxysphinganine + H2O = (4R)-hydroxysphinganine + a fatty acid. The catalysed reaction is N-(5Z,8Z,11Z,14Z-eicosatetraenoyl)-sphing-4-enine + H2O = sphing-4-enine + (5Z,8Z,11Z,14Z)-eicosatetraenoate. It carries out the reaction N-(5Z,8Z,11Z,14Z-eicosatetraenoyl)-sphinganine + H2O = sphinganine + (5Z,8Z,11Z,14Z)-eicosatetraenoate. It catalyses the reaction N-(5Z,8Z,11Z,14Z-eicosatetraenoyl)-(4R)-hydroxysphinganine + H2O = (4R)-hydroxysphinganine + (5Z,8Z,11Z,14Z)-eicosatetraenoate. The enzyme catalyses N-(11Z-eicosenoyl)-sphing-4-enine + H2O = (11Z)-eicosenoate + sphing-4-enine. The catalysed reaction is N-(11Z-eicosenoyl)-sphinganine + H2O = (11Z)-eicosenoate + sphinganine. It carries out the reaction N-(11Z-eicosenoyl)-(4R)-hydroxysphinganine + H2O = (11Z)-eicosenoate + (4R)-hydroxysphinganine. It catalyses the reaction N-(9Z-octadecenoyl)-sphing-4-enine + H2O = sphing-4-enine + (9Z)-octadecenoate. The enzyme catalyses N-(9Z-octadecenoyl)-sphinganine + H2O = sphinganine + (9Z)-octadecenoate. The catalysed reaction is N-(9Z-octadecenoyl)-(4R)-hydroxysphinganine + H2O = (4R)-hydroxysphinganine + (9Z)-octadecenoate. It carries out the reaction an N-acylsphing-4-enine + H2O = sphing-4-enine + a fatty acid. It catalyses the reaction an N-acylsphinganine + H2O = sphinganine + a fatty acid. It participates in lipid metabolism; sphingolipid metabolism. Activated by Ca(2+) and inhibited by Zn(2+). In terms of biological role, endoplasmic reticulum and Golgi ceramidase that catalyzes the hydrolysis of unsaturated long-chain C18:1-, C20:1- and C20:4-ceramides, dihydroceramides and phytoceramides into sphingoid bases like sphingosine and free fatty acids at alkaline pH. Ceramides, sphingosine, and its phosphorylated form sphingosine-1-phosphate are bioactive lipids that mediate cellular signaling pathways regulating several biological processes including cell proliferation, apoptosis and differentiation. Controls the generation of sphingosine in erythrocytes, and thereby sphingosine-1-phosphate in plasma. Through the regulation of ceramides and sphingosine-1-phosphate homeostasis in the brain may play a role in neurons survival and function. By regulating the levels of pro-inflammatory ceramides in immune cells and tissues, may modulate the inflammatory response. In Mus musculus (Mouse), this protein is Alkaline ceramidase 3 (Acer3).